Consider the following 235-residue polypeptide: Sugar fermentation stimulation protein homolog (235 aa).

This sequence belongs to the SfsA family.

The chain is Sugar fermentation stimulation protein homolog from Aliivibrio fischeri (strain ATCC 700601 / ES114) (Vibrio fischeri).